We begin with the raw amino-acid sequence, 546 residues long: CTP synthase (546 aa).

The amidoligase domain stretch occupies residues 1–266 (MTTRYIFVTG…DDLVVKRFGL (266 aa)). Ser14 contacts CTP. Position 14 (Ser14) interacts with UTP. Residues 15–20 (SLGKGI) and Asp72 contribute to the ATP site. Asp72 and Glu140 together coordinate Mg(2+). CTP contacts are provided by residues 147–149 (DIE), 187–192 (KTKPTQ), and Lys223. UTP contacts are provided by residues 187–192 (KTKPTQ) and Lys223. 239-241 (KDV) provides a ligand contact to ATP. The region spanning 291 to 542 (VIGMVGKYIE…VAAASAHQKR (252 aa)) is the Glutamine amidotransferase type-1 domain. An L-glutamine-binding site is contributed by Gly352. Cys379 serves as the catalytic Nucleophile; for glutamine hydrolysis. L-glutamine is bound by residues 380-383 (LGMQ), Glu403, and Arg470. Active-site residues include His515 and Glu517.

The protein belongs to the CTP synthase family. In terms of assembly, homotetramer.

It catalyses the reaction UTP + L-glutamine + ATP + H2O = CTP + L-glutamate + ADP + phosphate + 2 H(+). The catalysed reaction is L-glutamine + H2O = L-glutamate + NH4(+). It carries out the reaction UTP + NH4(+) + ATP = CTP + ADP + phosphate + 2 H(+). It functions in the pathway pyrimidine metabolism; CTP biosynthesis via de novo pathway; CTP from UDP: step 2/2. Its activity is regulated as follows. Allosterically activated by GTP, when glutamine is the substrate; GTP has no effect on the reaction when ammonia is the substrate. The allosteric effector GTP functions by stabilizing the protein conformation that binds the tetrahedral intermediate(s) formed during glutamine hydrolysis. Inhibited by the product CTP, via allosteric rather than competitive inhibition. Catalyzes the ATP-dependent amination of UTP to CTP with either L-glutamine or ammonia as the source of nitrogen. Regulates intracellular CTP levels through interactions with the four ribonucleotide triphosphates. The chain is CTP synthase from Shewanella sp. (strain MR-4).